Reading from the N-terminus, the 134-residue chain is Holo-[acyl-carrier-protein] synthase (134 aa).

Mg(2+) contacts are provided by Asp-8 and Glu-57.

The protein belongs to the P-Pant transferase superfamily. AcpS family. It depends on Mg(2+) as a cofactor.

It is found in the cytoplasm. The enzyme catalyses apo-[ACP] + CoA = holo-[ACP] + adenosine 3',5'-bisphosphate + H(+). In terms of biological role, transfers the 4'-phosphopantetheine moiety from coenzyme A to a Ser of acyl-carrier-protein. This is Holo-[acyl-carrier-protein] synthase from Agrobacterium fabrum (strain C58 / ATCC 33970) (Agrobacterium tumefaciens (strain C58)).